Here is a 376-residue protein sequence, read N- to C-terminus: Succinyl-diaminopimelate desuccinylase (376 aa).

Position 66 (histidine 66) interacts with Zn(2+). Residue aspartate 68 is part of the active site. Aspartate 99 is a binding site for Zn(2+). Glutamate 133 serves as the catalytic Proton acceptor. Residues glutamate 134, glutamate 162, and histidine 349 each coordinate Zn(2+).

This sequence belongs to the peptidase M20A family. DapE subfamily. Homodimer. Requires Zn(2+) as cofactor. Co(2+) is required as a cofactor.

It catalyses the reaction N-succinyl-(2S,6S)-2,6-diaminopimelate + H2O = (2S,6S)-2,6-diaminopimelate + succinate. It functions in the pathway amino-acid biosynthesis; L-lysine biosynthesis via DAP pathway; LL-2,6-diaminopimelate from (S)-tetrahydrodipicolinate (succinylase route): step 3/3. In terms of biological role, catalyzes the hydrolysis of N-succinyl-L,L-diaminopimelic acid (SDAP), forming succinate and LL-2,6-diaminopimelate (DAP), an intermediate involved in the bacterial biosynthesis of lysine and meso-diaminopimelic acid, an essential component of bacterial cell walls. This chain is Succinyl-diaminopimelate desuccinylase, found in Vesicomyosocius okutanii subsp. Calyptogena okutanii (strain HA).